We begin with the raw amino-acid sequence, 407 residues long: uncharacterized protein (407 aa).

Transmembrane regions (helical) follow at residues 22-42 (IVSV…PLAV), 51-71 (LGFS…ATLA), 101-121 (ALLL…GLLV), 126-146 (VLGI…IGRV), 154-174 (VISW…PVGV), 179-199 (ALIP…GYYL), 227-247 (GLGL…ITLY), 258-278 (LSLT…ANTI), 286-306 (VAIV…LAPV), 309-329 (VALV…PALG), 347-367 (AYSV…GYVA), and 369-389 (AFGY…GVAL).

Belongs to the major facilitator superfamily. YhhS family.

It localises to the cell inner membrane. This is an uncharacterized protein from Burkholderia mallei (strain NCTC 10229).